The primary structure comprises 266 residues: Undecaprenyl-diphosphatase (266 aa).

A run of 8 helical transmembrane segments spans residues 1–21, 39–59, 87–107, 111–131, 144–164, 183–203, 218–238, and 246–266; these read MDTF…FLPI, QGLS…VMYF, WWII…KGFI, FRSI…LWWA, VGWK…IPGT, AAAR…AILV, ALGL…HYFL, and MTPF…FIFL.

Belongs to the UppP family.

It localises to the cell inner membrane. The catalysed reaction is di-trans,octa-cis-undecaprenyl diphosphate + H2O = di-trans,octa-cis-undecaprenyl phosphate + phosphate + H(+). Its function is as follows. Catalyzes the dephosphorylation of undecaprenyl diphosphate (UPP). Confers resistance to bacitracin. The protein is Undecaprenyl-diphosphatase of Shewanella halifaxensis (strain HAW-EB4).